The primary structure comprises 449 residues: POU domain, class 3, transcription factor 1 (449 aa).

Disordered stretches follow at residues Met-1–Leu-22, Gly-76–Gly-108, Ala-132–Gln-152, Gly-184–Asp-251, and Lys-393–Gln-449. Gly residues-rich tracts occupy residues Gly-11–Gly-20 and Ala-93–Gly-108. Positions Ala-132–Pro-143 are enriched in low complexity. The segment covering Ala-188 to Gln-197 has biased composition (basic and acidic residues). The segment covering Ala-218–Pro-230 has biased composition (low complexity). Residues Glu-245–Asp-319 form the POU-specific domain. The homeobox DNA-binding region spans Lys-337–Thr-396. Over residues Pro-425–Ala-434 the composition is skewed to pro residues.

It belongs to the POU transcription factor family. Class-3 subfamily.

The protein localises to the nucleus. Transcription factor that binds to the octamer motif (5'-ATTTGCAT-3'). Acts as a transcriptional activator when binding cooperatively with SOX4, SOX11, or SOX12 to gene promoters. Acts as a transcriptional repressor of myelin-specific genes. The chain is POU domain, class 3, transcription factor 1 (Pou3f1) from Mus musculus (Mouse).